A 238-amino-acid polypeptide reads, in one-letter code: Ribonuclease 3 (238 aa).

The RNase III domain maps to 10 to 139; the sequence is FKQFQEQTGI…FIGALYLDQG (130 aa). Residue glutamate 52 coordinates Mg(2+). Aspartate 56 is a catalytic residue. Residues aspartate 125 and glutamate 128 each contribute to the Mg(2+) site. Residue glutamate 128 is part of the active site. In terms of domain architecture, DRBM spans 165–234; sequence DYKSQLQEFV…AQMALAKLKQ (70 aa).

The protein belongs to the ribonuclease III family. Homodimer. The cofactor is Mg(2+).

It localises to the cytoplasm. The catalysed reaction is Endonucleolytic cleavage to 5'-phosphomonoester.. In terms of biological role, digests double-stranded RNA. Involved in the processing of primary rRNA transcript to yield the immediate precursors to the large and small rRNAs (23S and 16S). Processes some mRNAs, and tRNAs when they are encoded in the rRNA operon. Processes pre-crRNA and tracrRNA of type II CRISPR loci if present in the organism. The chain is Ribonuclease 3 from Anoxybacillus flavithermus (strain DSM 21510 / WK1).